We begin with the raw amino-acid sequence, 301 residues long: Sulfate adenylyltransferase subunit 2 1 (301 aa).

The protein belongs to the PAPS reductase family. CysD subfamily. As to quaternary structure, heterodimer composed of CysD, the smaller subunit, and CysN.

It carries out the reaction sulfate + ATP + H(+) = adenosine 5'-phosphosulfate + diphosphate. It participates in sulfur metabolism; hydrogen sulfide biosynthesis; sulfite from sulfate: step 1/3. In terms of biological role, with CysN forms the ATP sulfurylase (ATPS) that catalyzes the adenylation of sulfate producing adenosine 5'-phosphosulfate (APS) and diphosphate, the first enzymatic step in sulfur assimilation pathway. APS synthesis involves the formation of a high-energy phosphoric-sulfuric acid anhydride bond driven by GTP hydrolysis by CysN coupled to ATP hydrolysis by CysD. This Shewanella sediminis (strain HAW-EB3) protein is Sulfate adenylyltransferase subunit 2 1.